Here is a 2766-residue protein sequence, read N- to C-terminus: Thyroglobulin (2766 aa).

Residues 1 to 20 (MTALVLWVSTLLSSVCLVAA) form the signal peptide. An Iodotyrosine; alternate modification is found at Y25. Y25 carries the sulfotyrosine; alternate modification. Y25 carries the thyroxine; alternate modification. Y25 is subject to Triiodothyronine; alternate. Thyroglobulin type-1 domains lie at 32–93 (LRPC…PTVC), 94–161 (LSFC…PTRC), 162–298 (PRSC…RFRC), and 299–359 (PTKC…PPSC). 8 cysteine pairs are disulfide-bonded: C35/C53, C64/C71, C73/C93, C97/C121, C132/C139, C141/C161, C165/C184, and C195/C236. Y109 bears the Iodotyrosine mark. An N-linked (GlcNAc...) asparagine glycan is attached at N111. Y150 bears the Iodotyrosine; alternate mark. Y150 is modified (diiodotyrosine; alternate). N-linked (GlcNAc...) asparagine glycosylation is present at N199. Iodotyrosine is present on residues Y235 and Y259. 9 disulfides stabilise this stretch: C302-C320, C331-C337, C339-C359, C365-C620, C408-C608, C631-C636, C638-C658, C662-C687, and C698-C703. 2 N-linked (GlcNAc...) asparagine glycosylation sites follow: N484 and N496. Thyroglobulin type-1 domains follow at residues 605 to 658 (AQAC…RPRC), 659 to 726 (PTKC…AKQC), 727 to 922 (PSVC…IPAC), 923 to 1074 (PGPC…MPQC), 1075 to 1146 (PTNC…SAQC), and 1147 to 1211 (PGLC…QPAC). Residue Y704 is modified to Iodotyrosine; alternate. Y704 is subject to Thyroxine; alternate. Y704 is subject to Triiodothyronine; alternate. A Diiodotyrosine; alternate modification is found at Y704. 16 disulfide bridges follow: C705/C726, C730/C763, C774/C899, C901/C922, C926/C1032, C1043/C1050, C1052/C1074, C1078/C1109, C1127/C1146, C1150/C1170, C1182/C1189, C1191/C1211, C1216/C1265, C1232/C1246, C1306/C1356, and C1331/C1347. A glycan (N-linked (GlcNAc...) asparagine) is linked at N748. Y785 carries the iodotyrosine modification. N817 is a glycosylation site (N-linked (GlcNAc...) asparagine). Residue Y867 is modified to Iodotyrosine; alternate. A Diiodotyrosine; alternate modification is found at Y867. A Diiodotyrosine modification is found at Y884. N-linked (GlcNAc...) asparagine glycosylation occurs at N948. An Iodotyrosine; alternate modification is found at Y993. Y993 is subject to Diiodotyrosine; alternate. N-linked (GlcNAc...) asparagine glycosylation occurs at N1141. Y1310 bears the Iodotyrosine mark. The residue at position 1310 (Y1310) is a Thyroxine. N-linked (GlcNAc...) asparagine glycosylation is found at N1349 and N1365. Intrachain disulfides connect C1441–C1458, C1461–C1472, C1475–C1489, C1492–C1509, C1513–C1522, C1542–C1564, C1602–C1626, C1606–C1612, and C1638–C1661. Type II repeat units follow at residues 1455–1468 (ALGC…SFSQ), 1469–1485 (DGRC…EQAG), and 1486–1502 (SSAC…ITTG). One can recognise a Thyroglobulin type-1 11 domain in the interval 1510-1564 (VTDCQKNEAGLQCDQNGQYQASQKNRDSGEVFCVDSEGRKLQWLQTEAGLSESQC). Residues 1602–1722 (CLTDCANDEA…GANLTDTHTY (121 aa)) form a Type IIIA repeat. N1715, N1729, N1773, and N1864 each carry an N-linked (GlcNAc...) asparagine glycan. Intrachain disulfides connect C1723–C1748, C1727–C1733, C1732–C1834, and C1759–C1776. Residues 1723–1889 (CLLACDNDSC…LFSAEQANLW (167 aa)) form a Type IIIB repeat. Disulfide bonds link C1890/C1916, C1894/C1901, C1925/C1936, C1993/C2021, C1997/C2003, C2002/C2073, and C2032/C2045. One copy of the Type IIIA repeat lies at 1890–1992 (CLSRCAQEPI…GKLISNGFFE (103 aa)). N-linked (GlcNAc...) asparagine glycosylation is present at N1935. Residues 1993-2125 (CERLCDRDPC…AATSNFSMAQ (133 aa)) form a Type IIIB repeat. N2010 carries N-linked (GlcNAc...) asparagine glycosylation. N-linked (GlcNAc...) asparagine glycosylation is present at N2120. Residues 2126 to 2183 (DFCLQQCSRHQDCLVTTLQIQPGVVRCVFYPDIQNCIHSLRSHTCWLLLHEEATYIYR) form a Type IIIA repeat. Intrachain disulfides connect C2128–C2152, C2132–C2138, and C2161–C2170. The residue at position 2182 (Y2182) is an Iodotyrosine. The segment at 2186–2766 (GIPLVQSDVT…LEPVPKSYSK (581 aa)) is cholinesterase-like (ChEL). Residue N2249 is glycosylated (N-linked (GlcNAc...) asparagine). Residues C2263 and C2280 are joined by a disulfide bond. N2294 carries N-linked (GlcNAc...) asparagine glycosylation. Residues C2441 and C2452 are joined by a disulfide bond. Y2539 carries the post-translational modification Thyroxine. The residue at position 2572 (Y2572) is an Iodotyrosine; alternate. Thyroxine; alternate is present on Y2572. Y2572 carries the post-translational modification Triiodothyronine; alternate. Y2572 is modified (diiodotyrosine; alternate). N2581 carries an N-linked (GlcNAc...) asparagine glycan. An iodotyrosine mark is found at Y2586 and Y2616. A disulfide bond links C2590 and C2714. At Y2696 the chain carries Diiodotyrosine. Positions 2729-2766 (GAKDAQLTKSEEEDLEVGPGLEEDLSGSLEPVPKSYSK) are disordered. Residues 2739-2753 (EEEDLEVGPGLEEDL) show a composition bias toward acidic residues. Y2764 bears the Iodotyrosine; alternate mark. Y2764 bears the Thyroxine; alternate mark. A Triiodothyronine; alternate modification is found at Y2764. Residue Y2764 is modified to Diiodotyrosine; alternate.

The protein belongs to the type-B carboxylesterase/lipase family. As to quaternary structure, monomer. Homodimer (via ChEL region); occurs in the endoplasmic reticulum and is required for export to the Golgi apparatus. Homooligomer; disulfide-linked; stored in this form in the thyroid follicle lumen. Iodinated on tyrosine residues by TPO. There are 4 pairs of iodinated tyrosines used for coupling: acceptor Tyr-25 is coupled to donor Tyr-150 or Tyr-235, acceptor Tyr-2572 is coupled to donor Tyr-2539, acceptor Tyr-2764 in monomer 1 is coupled to donor Tyr-2764 in monomer 2 and acceptor Tyr-1310 in monomer 1 is coupled to donor Tyr-109 in monomer 2. Post-translationally, sulfated tyrosines are desulfated during iodination. In terms of processing, undergoes sequential proteolysis by cathepsins to release thyroxine (T4) and triiodothyronine (T3) hormones. In the thyroid follicle lumen, cross-linked TG (storage form) is solubilized by limited proteolysis mediated by cathepsins CTSB and/or CTSL. Partially cleaved TG is further processed by CTSK/cathepsin K and/or CTSL resulting in the release of T4. Following endocytosis, further processing occurs leading to the release of T3 and more T4 hormones. In terms of tissue distribution, specifically expressed in the thyroid gland.

It localises to the secreted. Functionally, acts as a substrate for the production of iodinated thyroid hormones thyroxine (T4) and triiodothyronine (T3). The synthesis of T3 and T4 involves iodination of selected tyrosine residues of TG/thyroglobulin followed by their oxidative coupling. Following TG re-internalization and lysosomal-mediated proteolysis, T3 and T4 are released from the polypeptide backbone leading to their secretion into the bloodstream. One dimer produces 7 thyroid hormone molecules. In Mus musculus (Mouse), this protein is Thyroglobulin (Tg).